Consider the following 161-residue polypeptide: Nucleotide-binding protein azo2183 (161 aa).

This sequence belongs to the YajQ family.

Functionally, nucleotide-binding protein. This is Nucleotide-binding protein azo2183 from Azoarcus sp. (strain BH72).